The sequence spans 756 residues: uncharacterized protein (756 aa).

This is an uncharacterized protein from Mycoplasma genitalium (strain ATCC 33530 / DSM 19775 / NCTC 10195 / G37) (Mycoplasmoides genitalium).